A 394-amino-acid chain; its full sequence is 1-deoxy-D-xylulose 5-phosphate reductoisomerase (394 aa).

The NADPH site is built by Thr14, Gly15, Ser16, Ile17, Gly40, and Asn128. Lys129 contacts 1-deoxy-D-xylulose 5-phosphate. An NADPH-binding site is contributed by Glu130. Position 154 (Asp154) interacts with Mn(2+). The 1-deoxy-D-xylulose 5-phosphate site is built by Ser155, Glu156, Ser180, and His203. Glu156 is a Mn(2+) binding site. Residue Gly209 participates in NADPH binding. Positions 216, 221, 222, and 225 each coordinate 1-deoxy-D-xylulose 5-phosphate. Glu225 serves as a coordination point for Mn(2+).

Belongs to the DXR family. Mg(2+) serves as cofactor. Mn(2+) is required as a cofactor.

It carries out the reaction 2-C-methyl-D-erythritol 4-phosphate + NADP(+) = 1-deoxy-D-xylulose 5-phosphate + NADPH + H(+). It participates in isoprenoid biosynthesis; isopentenyl diphosphate biosynthesis via DXP pathway; isopentenyl diphosphate from 1-deoxy-D-xylulose 5-phosphate: step 1/6. Catalyzes the NADPH-dependent rearrangement and reduction of 1-deoxy-D-xylulose-5-phosphate (DXP) to 2-C-methyl-D-erythritol 4-phosphate (MEP). The chain is 1-deoxy-D-xylulose 5-phosphate reductoisomerase from Xylella fastidiosa (strain M12).